The primary structure comprises 86 residues: Large ribosomal subunit protein bL31B (86 aa).

This sequence belongs to the bacterial ribosomal protein bL31 family. Type B subfamily. Part of the 50S ribosomal subunit.

The sequence is that of Large ribosomal subunit protein bL31B from Erwinia tasmaniensis (strain DSM 17950 / CFBP 7177 / CIP 109463 / NCPPB 4357 / Et1/99).